The sequence spans 400 residues: Lipase member N (400 aa).

Residues Met-1–Ser-19 form the signal peptide. The 301-residue stretch at Pro-81 to Gly-381 folds into the AB hydrolase-1 domain. Ser-175 acts as the Nucleophile in catalysis. An intrachain disulfide couples Cys-249 to Cys-258. N-linked (GlcNAc...) asparagine glycosylation is present at Asn-274. Residues Asp-346 and His-375 each act as charge relay system in the active site.

This sequence belongs to the AB hydrolase superfamily. Lipase family. In terms of tissue distribution, highly expressed in the epidermis. Also detected in other tissues, although at much lower levels, including liver and kidney.

The protein resides in the secreted. The enzyme catalyses a sterol ester + H2O = a sterol + a fatty acid + H(+). It carries out the reaction a triacylglycerol + H2O = a 1,2-diacylglycerol + a fatty acid + H(+). The catalysed reaction is a triacylglycerol + H2O = a diacylglycerol + a fatty acid + H(+). It catalyses the reaction a cholesterol ester + H2O = cholesterol + a fatty acid + H(+). Its function is as follows. Plays a highly specific role in the last step of keratinocyte differentiation. Contains two distinct domains: the alpha/beta hydrolase fold and the abhydrolase-associated lipase region, also features the consensus sequence of the active site of a genuine lipase. May have an essential function in lipid metabolism of the most differentiated epidermal layers. This is Lipase member N (Lipn) from Mus musculus (Mouse).